The following is a 294-amino-acid chain: Probable 2-(5''-triphosphoribosyl)-3'-dephosphocoenzyme-A synthase (294 aa).

The protein belongs to the CitG/MdcB family.

It catalyses the reaction 3'-dephospho-CoA + ATP = 2'-(5''-triphospho-alpha-D-ribosyl)-3'-dephospho-CoA + adenine. This is Probable 2-(5''-triphosphoribosyl)-3'-dephosphocoenzyme-A synthase from Streptococcus pyogenes serotype M49 (strain NZ131).